A 285-amino-acid chain; its full sequence is UPF0354 protein SH1179 (285 aa).

Belongs to the UPF0354 family.

The polypeptide is UPF0354 protein SH1179 (Staphylococcus haemolyticus (strain JCSC1435)).